Here is a 21-residue protein sequence, read N- to C-terminus: Alpha-aminoadipic semialdehyde dehydrogenase (21 aa).

This sequence belongs to the aldehyde dehydrogenase family. Homotetramer.

The catalysed reaction is (S)-2-amino-6-oxohexanoate + NADP(+) + H2O = L-2-aminoadipate + NADPH + 2 H(+). It catalyses the reaction (S)-2-amino-6-oxohexanoate + NAD(+) + H2O = L-2-aminoadipate + NADH + 2 H(+). The chain is Alpha-aminoadipic semialdehyde dehydrogenase (aldh7a1) from Ctenopharyngodon idella (Grass carp).